The sequence spans 863 residues: Alanine--tRNA ligase (863 aa).

4 residues coordinate Zn(2+): His552, His556, Cys654, and His658.

The protein belongs to the class-II aminoacyl-tRNA synthetase family. Zn(2+) serves as cofactor.

The protein resides in the cytoplasm. The enzyme catalyses tRNA(Ala) + L-alanine + ATP = L-alanyl-tRNA(Ala) + AMP + diphosphate. In terms of biological role, catalyzes the attachment of alanine to tRNA(Ala) in a two-step reaction: alanine is first activated by ATP to form Ala-AMP and then transferred to the acceptor end of tRNA(Ala). Also edits incorrectly charged Ser-tRNA(Ala) and Gly-tRNA(Ala) via its editing domain. In Nitrosomonas eutropha (strain DSM 101675 / C91 / Nm57), this protein is Alanine--tRNA ligase.